The chain runs to 601 residues: Glutathione-regulated potassium-efflux system protein KefB (601 aa).

A run of 13 helical transmembrane segments spans residues 4-24, 29-49, 55-75, 87-107, 115-135, 152-172, 177-197, 207-227, 230-250, 268-288, 291-311, 326-346, and 356-376; these read SDLLLAGVLFLFAAVIAVPLA, IGAVLGYLLAGIAIGPWGLGF, EILHFSELGVVFLMFIIGLEL, IFGVGAAQVMLSAAILGGLLM, AAVVGGIGLAMSSTAMALQLM, VLLFQDLAVIPALALVPLLAG, HVNWLTVGMKVLAFAGMLIGG, FIASSGVREVFTAATLLLVLG, LFMEALGLSMALGTFIAGVLL, GLLLGLFFISVGMALNLGVLY, LLWVAVSVAVLVAVKMLVLYL, FAGVLSQGGEFAFVLFSLPAS, and ALLLVAVTLSMMTTPLLMKGI. Positions 400-519 constitute an RCK N-terminal domain; it reads KPQVIIVGFG…AGVTQFSRET (120 aa).

This sequence belongs to the monovalent cation:proton antiporter 2 (CPA2) transporter (TC 2.A.37) family. KefB subfamily. In terms of assembly, interacts with the regulatory subunit KefG.

It is found in the cell inner membrane. In terms of biological role, pore-forming subunit of a potassium efflux system that confers protection against electrophiles. Catalyzes K(+)/H(+) antiport. This is Glutathione-regulated potassium-efflux system protein KefB from Klebsiella pneumoniae subsp. pneumoniae (strain ATCC 700721 / MGH 78578).